Reading from the N-terminus, the 611-residue chain is MLLSAIASQTLLSSNPNLHFSNSIPNPRPSNPSLKLLNASSSSSSSSSSSIFTRGLRYVNHTVSNEESEPGGGETMVASASAIASAIRGASTTPVEFTQMIEKDHLKTKIILPSPDFQRLCLEQLDLFRQIVDPNAVLSIYVRPAGSYVMDRLELRRVTCYPSVNAGDVVILVGNFGIPAGLRAAEASLSSQQVELVSKHRAAVFPMVKHPFVVGFLVAELPVEAEEEEEEEEEEKPHGVNQFLSPEEAYALPASANTKSPRVKLPSVKVFTEEQRSYAINISRTLAMAYVMDQKTMLLQQSSWQNNVRMSKLVEQIRGPLSTMRTLSKMLSTHTKRNQISHDIVEDLIVQGDQIKDTLEELQDAVHLTKANIVRHNEEALKKINKTHNETRRSKYEHKDPIDGSQISSTRLSLGSGLDDSEMPMPPLALAPLQMHSIRPCDISNVLLDMVETVRPLALTQQRVVELGENSASLQVAVEEPALRQALSNLIEGALLRTHVGGKVEILSTRAPAGGSLVVIDDDGPDMRYMTQMHSLTPFGAELLSENMVEDNMTWNFVAGLTVAREILESYGCVIRVISPRSSDAALGAGGTRVELWLPAFPAAVSEANEA.

Residues 1 to 79 (MLLSAIASQT…PGGGETMVAS (79 aa)) constitute a chloroplast transit peptide. Residues 17-50 (NLHFSNSIPNPRPSNPSLKLLNASSSSSSSSSSS) are disordered. The span at 40–50 (SSSSSSSSSSS) shows a compositional bias: low complexity. The tract at residues 116–300 (DFQRLCLEQL…VMDQKTMLLQ (185 aa)) is GAF. Cys-121 lines the [3Fe-4S] cluster pocket. Phosphoserine is present on Ser-188. The region spanning 312–602 (KLVEQIRGPL…RVELWLPAFP (291 aa)) is the Histidine kinase domain. Residues 345–380 (VEDLIVQGDQIKDTLEELQDAVHLTKANIVRHNEEA) adopt a coiled-coil conformation. Positions 385–402 (NKTHNETRRSKYEHKDPI) are enriched in basic and acidic residues. The interval 385-420 (NKTHNETRRSKYEHKDPIDGSQISSTRLSLGSGLDD) is disordered.

The protein belongs to the chloroplast sensor kinase protein family. Self-interacts. Interacts with the plastoquinone analog 2,5-dibromo-3-methyl-5-isopropyl-p-benzoquinone (DBMIB) and with SIGA/SIG1. Requires [3Fe-4S] cluster as cofactor. In terms of processing, autophosphorylated, possibly on tyrosine residues, in photosystem I (PS I) light and in the presence of manganese ions Mn(2+), to a lesser degree, in the presence of calcium ions Ca(2+), but not in the presence of magnesium ions Mg(2+). Dithiothreitol (DTT) stimulates autophosphorylation. Phosphorylated on Ser-188 in vivo after exposure to far-red light (when plastoquinone (PQ) is oxidized). Not phosphorylated under orange light (reduces PQ).

The protein resides in the plastid. Its subcellular location is the chloroplast stroma. It carries out the reaction L-tyrosyl-[protein] + ATP = O-phospho-L-tyrosyl-[protein] + ADP + H(+). Sensor kinase that senses the plastoquinone (PQ) redox state involved in stoichiometry adjustment of both photosystems (e.g. long-term adaptation via transcriptional regulation of reaction center genes of photosystems I and II) and state transitions (e.g. short-term adaptation involving reversible post-translational phosphorylation of light-harvesting complex II, LHC II), thus linking photosynthesis with gene expression in chloroplasts. Autophosphorylates, probably on a tyrosine residue. Probably phosphorylates SIGA/SIG1 in response to plastoquinone redox state modification. Reduced PQ suppresses its autophosphorylation activity. Represses expression of a number of chloroplast-encoded genes. This chain is Chloroplast sensor kinase, chloroplastic, found in Arabidopsis thaliana (Mouse-ear cress).